A 655-amino-acid polypeptide reads, in one-letter code: p-hydroxybenzoic acid efflux pump subunit AaeB (655 aa).

11 helical membrane-spanning segments follow: residues 13-33, 38-58, 69-89, 93-113, 121-141, 152-172, 370-390, 407-427, 431-451, 459-479, and 482-502; these read FAVK…HFQL, WAVL…GGEP, LRII…IAMI, LLMI…SSLV, WGLA…EPLL, EIVI…PRSI, LFWL…IAVV, FIYG…VIIP, QSML…GIEV, MGAL…TFHF, and FLDS…VILL.

Belongs to the aromatic acid exporter ArAE (TC 2.A.85) family.

The protein localises to the cell inner membrane. In terms of biological role, forms an efflux pump with AaeA. Could function as a metabolic relief valve, allowing to eliminate certain compounds when they accumulate to high levels in the cell. This chain is p-hydroxybenzoic acid efflux pump subunit AaeB, found in Escherichia coli (strain K12 / MC4100 / BW2952).